The primary structure comprises 285 residues: Enterobactin synthase component B (285 aa).

An isochorismatase region spans residues 2 to 213 (AIPKLQAYAL…EELLPAPIPA (212 aa)). The Carrier domain maps to 209–284 (APIPASKAAL…AWWKLLSREV (76 aa)). Asp227, Gly242, and Asp244 together coordinate Mg(2+). Position 245 is an O-(pantetheine 4'-phosphoryl)serine (Ser245).

In the N-terminal section; belongs to the isochorismatase family. As to quaternary structure, proteins EntB, EntD, EntE, and EntF form a multienzyme complex called enterobactin synthase. Homodimer. Also forms a specific pairwise interaction with EntC; this interaction likely facilitates substrate channeling to connect the EntB and EntC active sites. The cofactor is Mg(2+). 4'-phosphopantetheine is transferred from CoA to a specific serine of apo-EntB by EntD. Holo-EntB so formed is then acylated with 2,3-dihydroxybenzoate in a reaction catalyzed by EntE.

The protein resides in the cytoplasm. The enzyme catalyses 3 2,3-dihydroxybenzoate + 3 L-serine + 6 ATP = enterobactin + 6 AMP + 6 diphosphate + 4 H(+). It carries out the reaction isochorismate + H2O = (2S,3S)-2,3-dihydroxy-2,3-dihydrobenzoate + pyruvate. It participates in siderophore biosynthesis; enterobactin biosynthesis. Functionally, involved in the biosynthesis of the siderophore enterobactin (enterochelin), which is a macrocyclic trimeric lactone of N-(2,3-dihydroxybenzoyl)-serine. The serine trilactone serves as a scaffolding for the three catechol functionalities that provide hexadentate coordination for the tightly ligated iron(3+) atoms. EntB is a bifunctional protein that serves as an isochorismate lyase and an aryl carrier protein (ArCP). Catalyzes the conversion of isochorismate to 2,3-dihydro-2,3-dihydroxybenzoate (2,3-diDHB), the precursor of 2,3-dihydroxybenzoate (DHB). In the enterobactin assembly, EntB functions as an aryl carrier protein phosphopantetheinylated near the C terminus by EntD to yield holo-EntB, which is then acylated by EntE with 2,3-dihydroxybenzoyl-AMP to form DHB-holo-EntB. Then this product will serve in the formation of the amide bond between 2,3-dihydroxybenzoate (DHB) and L-serine. The chain is Enterobactin synthase component B from Escherichia coli O157:H7.